The primary structure comprises 275 residues: Beta-lactamase OXA-2 (275 aa).

A signal peptide spans 1–21; the sequence is MAIRIFAILFSIFSLATFAHA. Catalysis depends on serine 72, which acts as the Acyl-ester intermediate. At lysine 75 the chain carries N6-carboxylysine. A substrate-binding site is contributed by 210–212; that stretch reads KTG.

It belongs to the class-D beta-lactamase family.

The catalysed reaction is a beta-lactam + H2O = a substituted beta-amino acid. This is an oxacillin-hydrolyzing beta-lactamase. In Escherichia coli, this protein is Beta-lactamase OXA-2 (bla).